The sequence spans 474 residues: Tubulin gamma-2 chain (474 aa).

142–148 contributes to the GTP binding site; that stretch reads AGGTGSG.

The protein belongs to the tubulin family. In terms of assembly, gamma-tubulin complex is composed of gamma-tubulin and GCP proteins.

The protein resides in the cytoplasm. It localises to the cytoskeleton. It is found in the microtubule organizing center. The protein localises to the nucleus. Its subcellular location is the cell cortex. In terms of biological role, tubulin is the major constituent of microtubules. The gamma chain is found at microtubule organizing centers (MTOC) such as the spindle poles, suggesting that it is involved in the minus-end nucleation of microtubule assembly. Its function is as follows. Gamma-tubulin complex is essential for the control of microtubular network remodeling in the course of initiation and development of giant-feeding cells, and for the successful reproduction of nematodes (e.g. Meloidogyne spp.) in their plant hosts. This is Tubulin gamma-2 chain (TUBG2) from Arabidopsis thaliana (Mouse-ear cress).